We begin with the raw amino-acid sequence, 83 residues long: NAD(P)H-quinone oxidoreductase subunit L (83 aa).

The next 2 membrane-spanning stretches (helical) occupy residues 18-38 (ILAY…ALFF) and 53-73 (LLVY…APFL).

This sequence belongs to the complex I NdhL subunit family. In terms of assembly, NDH-1 can be composed of about 15 different subunits; different subcomplexes with different compositions have been identified which probably have different functions.

The protein resides in the cellular thylakoid membrane. It carries out the reaction a plastoquinone + NADH + (n+1) H(+)(in) = a plastoquinol + NAD(+) + n H(+)(out). The enzyme catalyses a plastoquinone + NADPH + (n+1) H(+)(in) = a plastoquinol + NADP(+) + n H(+)(out). NDH-1 shuttles electrons from an unknown electron donor, via FMN and iron-sulfur (Fe-S) centers, to quinones in the respiratory and/or the photosynthetic chain. The immediate electron acceptor for the enzyme in this species is believed to be plastoquinone. Couples the redox reaction to proton translocation, and thus conserves the redox energy in a proton gradient. Cyanobacterial NDH-1 also plays a role in inorganic carbon-concentration. The sequence is that of NAD(P)H-quinone oxidoreductase subunit L from Parasynechococcus marenigrum (strain WH8102).